A 132-amino-acid polypeptide reads, in one-letter code: uncharacterized protein (132 aa).

Positions 107–132 (LNTFSGSGQKHSQPGSGQHPFSFRKD) are disordered. Polar residues predominate over residues 108 to 122 (NTFSGSGQKHSQPGS).

This is an uncharacterized protein from Bacillus subtilis (strain 168).